The following is a 199-amino-acid chain: dTTP/UTP pyrophosphatase (199 aa).

Asp73 functions as the Proton acceptor in the catalytic mechanism.

This sequence belongs to the Maf family. YhdE subfamily. It depends on a divalent metal cation as a cofactor.

The protein localises to the cytoplasm. It catalyses the reaction dTTP + H2O = dTMP + diphosphate + H(+). The enzyme catalyses UTP + H2O = UMP + diphosphate + H(+). Functionally, nucleoside triphosphate pyrophosphatase that hydrolyzes dTTP and UTP. May have a dual role in cell division arrest and in preventing the incorporation of modified nucleotides into cellular nucleic acids. This Caldicellulosiruptor bescii (strain ATCC BAA-1888 / DSM 6725 / KCTC 15123 / Z-1320) (Anaerocellum thermophilum) protein is dTTP/UTP pyrophosphatase.